The sequence spans 159 residues: Ribosomal RNA large subunit methyltransferase H (159 aa).

Leu76 and Gly108 together coordinate S-adenosyl-L-methionine.

Belongs to the RNA methyltransferase RlmH family. Homodimer.

The protein localises to the cytoplasm. It catalyses the reaction pseudouridine(1915) in 23S rRNA + S-adenosyl-L-methionine = N(3)-methylpseudouridine(1915) in 23S rRNA + S-adenosyl-L-homocysteine + H(+). Functionally, specifically methylates the pseudouridine at position 1915 (m3Psi1915) in 23S rRNA. The protein is Ribosomal RNA large subunit methyltransferase H of Limosilactobacillus fermentum (strain NBRC 3956 / LMG 18251) (Lactobacillus fermentum).